Reading from the N-terminus, the 205-residue chain is Large ribosomal subunit protein uL4 (205 aa).

Residues 48–79 (KAQKSRSDVSGGGKKPWKQKGSGHARAGTTRS) are disordered.

Belongs to the universal ribosomal protein uL4 family. As to quaternary structure, part of the 50S ribosomal subunit.

Functionally, one of the primary rRNA binding proteins, this protein initially binds near the 5'-end of the 23S rRNA. It is important during the early stages of 50S assembly. It makes multiple contacts with different domains of the 23S rRNA in the assembled 50S subunit and ribosome. In terms of biological role, forms part of the polypeptide exit tunnel. The sequence is that of Large ribosomal subunit protein uL4 from Methylococcus capsulatus (strain ATCC 33009 / NCIMB 11132 / Bath).